We begin with the raw amino-acid sequence, 351 residues long: MSVTMTLGQLAEVLGATLKGPEALQITGLATLQEAGPTQLSFLANPQYRKYLDNSQAGAVLLKAADAEGFAGNTLVVADPYLAYARISHLFDPKPKAEAGIHPSAVVAEDAQVDASASIGPFAVIESGARIGANVSIGAHCFIGARCVVGEGGWLAPRVTLYHDVTIGKRVVIQSGAVIGGEGFGFANEKGIWRKIAQIGGVTIGDDVEIGVNTAIDRGALSDTRIGDGVKLDNQIQIAHNVQIGDHTAMAACVGISGSTRIGKHCMLAGGVGLVGHIDICDNVFVSGMTMVTRSITEPGSYSSGTAMQPLADWRKSAARIRHLDDMAKRLQQLEKRVDTVTSGGLPTSEG.

The Proton acceptor role is filled by H240.

It belongs to the transferase hexapeptide repeat family. LpxD subfamily. As to quaternary structure, homotrimer.

It catalyses the reaction a UDP-3-O-[(3R)-3-hydroxyacyl]-alpha-D-glucosamine + a (3R)-hydroxyacyl-[ACP] = a UDP-2-N,3-O-bis[(3R)-3-hydroxyacyl]-alpha-D-glucosamine + holo-[ACP] + H(+). Its pathway is bacterial outer membrane biogenesis; LPS lipid A biosynthesis. Its function is as follows. Catalyzes the N-acylation of UDP-3-O-acylglucosamine using 3-hydroxyacyl-ACP as the acyl donor. Is involved in the biosynthesis of lipid A, a phosphorylated glycolipid that anchors the lipopolysaccharide to the outer membrane of the cell. This chain is UDP-3-O-acylglucosamine N-acyltransferase, found in Pseudomonas putida (strain ATCC 700007 / DSM 6899 / JCM 31910 / BCRC 17059 / LMG 24140 / F1).